The following is a 201-amino-acid chain: LexA repressor (201 aa).

The H-T-H motif DNA-binding region spans 28-48; the sequence is MRDIAAHLRISGTLGVSKHLT. Active-site for autocatalytic cleavage activity residues include Ser120 and Lys157.

It belongs to the peptidase S24 family. Homodimer.

The enzyme catalyses Hydrolysis of Ala-|-Gly bond in repressor LexA.. Represses a number of genes involved in the response to DNA damage (SOS response), including recA and lexA. In the presence of single-stranded DNA, RecA interacts with LexA causing an autocatalytic cleavage which disrupts the DNA-binding part of LexA, leading to derepression of the SOS regulon and eventually DNA repair. In Geobacter metallireducens (strain ATCC 53774 / DSM 7210 / GS-15), this protein is LexA repressor.